The following is a 332-amino-acid chain: RING-H2 finger protein ATL81 (332 aa).

An N-terminal signal peptide occupies residues 1–19 (MYDLTFLLISLFPIDITLP). Residues 76–96 (IVLTGSLLFIIFTGFFSFFFC) traverse the membrane as a helical segment. The RING-type; atypical zinc finger occupies 154-196 (CSICLTEFMDDDTIRLISTCNHSFHTICIDLWFEGHKTCPVCR).

This sequence belongs to the RING-type zinc finger family. ATL subfamily.

It is found in the membrane. The enzyme catalyses S-ubiquitinyl-[E2 ubiquitin-conjugating enzyme]-L-cysteine + [acceptor protein]-L-lysine = [E2 ubiquitin-conjugating enzyme]-L-cysteine + N(6)-ubiquitinyl-[acceptor protein]-L-lysine.. It participates in protein modification; protein ubiquitination. The polypeptide is RING-H2 finger protein ATL81 (ATL81) (Arabidopsis thaliana (Mouse-ear cress)).